A 143-amino-acid polypeptide reads, in one-letter code: MSDNNGTPEPQVETTSVFRADLLKEMESSTGTAPASTGAENLPAGSALLVVKRGPNAGARFLLDQPTTTAGRHPESDIFLDDVTVSRRHAEFRINEGEFEVVDVGSLNGTYVNREPRNAQVMQTGDEIQIGKFRLVFLAGPAE.

The residue at position 14 (threonine 14) is a Phosphothreonine. The FHA domain maps to 68-117; the sequence is TTAGRHPESDIFLDDVTVSRRHAEFRINEGEFEVVDVGSLNGTYVNREPR.

It localises to the cytoplasm. In terms of biological role, an essential component of the PknG signaling pathway. When unphosphorylated, it inhibits the activity of 2-oxoglutarate dehydrogenase. When phosphorylated it does not inhibit 2-oxoglutarate dehydrogenase. In Corynebacterium glutamicum (strain ATCC 13032 / DSM 20300 / JCM 1318 / BCRC 11384 / CCUG 27702 / LMG 3730 / NBRC 12168 / NCIMB 10025 / NRRL B-2784 / 534), this protein is Oxoglutarate dehydrogenase inhibitor (odhI).